Here is a 327-residue protein sequence, read N- to C-terminus: Complex I intermediate-associated protein 30, mitochondrial (327 aa).

Residues 1-24 constitute a mitochondrion transit peptide; it reads MALVHKLLRDTYILRKFSKPTSAL. Residues 42 to 63 form a disordered region; the sequence is PVASPGKASSQRKTEGDLQGDH. A compositionally biased stretch (basic and acidic residues) spans 53 to 63; it reads RKTEGDLQGDH. Ser318 carries the phosphoserine modification.

Belongs to the CIA30 family. In terms of assembly, part of the mitochondrial complex I assembly/MCIA complex that comprises at least the core subunits TMEM126B, NDUFAF1, ECSIT and ACAD9 and complement subunits such as COA1 and TMEM186. Interacts with ECSIT. Interacts with ACAD9. At early stages of complex I assembly, it is found in intermediate subcomplexes that contain different subunits including NDUFB6, NDUFA6, NDUFA9, NDUFS3, NDUFS7, ND1, ND2 and ND3. Interacts with TMEM70 and TMEM242.

The protein resides in the mitochondrion. Its subcellular location is the mitochondrion matrix. As part of the MCIA complex, involved in the assembly of the mitochondrial complex I. This chain is Complex I intermediate-associated protein 30, mitochondrial, found in Gorilla gorilla gorilla (Western lowland gorilla).